Consider the following 583-residue polypeptide: MRRLLLAGILRRASSSPSSHHHLHLVRALSASSPLPASDADLRKYAGYALLLLGCGAATYYSFPLPPDALHKKAVPFKYAPLPDDLHAVSNWSATHEVHTRVLLQPDSLPVLHDALAAAHGERRKLRPLGSGLSPNGLALSRAGMVNLALMDKVLDVDAKKKTVTVQAGIRVAELVDTLREHGLTLQNFASIREQQVGGIIQVGAHGTGARLPPIDEQVISMKLVTPAKGTIELSREKDPDLFYLARCGLGGLGVVAEVTLQCVERHQLIEHTFVSSADEVKKNHKKWLSENKHIKYLWIPYTDTVVVVQCNPPSRWRTPKFTSKYGKDEAIQHVRDLYRESLKKYRTKAESNDPEVDQLSFTELRDRLLALDPLDKDHVIRINKAEAEYWKKSEGYRMGWSDEILGFDCGGQQWVSETCFPAGTLAKPNMKDLDYIEELLQLIEKEDIPAPAPIEQRWTACSRSPMSPASSSQEDDIFSWVGIIMYLPTSDARQRKEITEEFFNYRSKTQTNLWDGYSAYEHWAKIEVPKDKDELTELLARLRKRFPVDAYNKARMELDPNKVLSNAKLEKLFPVTEVQHVK.

The transit peptide at 1 to 36 (MRRLLLAGILRRASSSPSSHHHLHLVRALSASSPLP) directs the protein to the mitochondrion. The propeptide at 37 to 78 (ASDADLRKYAGYALLLLGCGAATYYSFPLPPDALHKKAVPFK) is removed in mature form. The helical transmembrane segment at 45-61 (YAGYALLLLGCGAATYY) threads the bilayer. Residues 95 to 266 (THEVHTRVLL…AEVTLQCVER (172 aa)) enclose the FAD-binding PCMH-type domain.

It depends on FAD as a cofactor.

Its subcellular location is the mitochondrion membrane. It carries out the reaction L-galactono-1,4-lactone + 4 Fe(III)-[cytochrome c] = L-dehydroascorbate + 4 Fe(II)-[cytochrome c] + 5 H(+). The protein operates within cofactor biosynthesis; L-ascorbate biosynthesis. Functionally, involved in the biosynthesis of ascorbic acid. The chain is L-galactono-1,4-lactone dehydrogenase 2, mitochondrial (GLDH2) from Oryza sativa subsp. japonica (Rice).